The chain runs to 575 residues: Putative export ATP-binding/permease protein RBE_0492 (575 aa).

The 284-residue stretch at 20–303 folds into the ABC transmembrane type-1 domain; the sequence is LIIVIISLLS…IFELLSEMHL (284 aa). 6 helical membrane-spanning segments follow: residues 21–41, 61–81, 135–155, 158–178, 242–262, and 277–297; these read IIVI…GNVF, ILYI…RSYF, FLSF…LMFF, FKLA…IIKF, ALFF…VIWI, and IISF…IFEL. The region spanning 336-571 is the ABC transporter domain; sequence LEFKNVNFSY…SDLYRTIYKE (236 aa). Position 371-378 (371-378) interacts with ATP; that stretch reads GRSGSGKS.

The protein belongs to the ABC transporter superfamily. As to quaternary structure, homodimer.

Its subcellular location is the cell inner membrane. Part of an ABC transporter complex. Transmembrane domains (TMD) form a pore in the inner membrane and the ATP-binding domain (NBD) is responsible for energy generation. The chain is Putative export ATP-binding/permease protein RBE_0492 from Rickettsia bellii (strain RML369-C).